Here is a 648-residue protein sequence, read N- to C-terminus: Centrosomal protein of 63 kDa-B (648 aa).

Coiled coils occupy residues 19 to 188 and 222 to 555; these read DSCE…QSHN and EEEL…DAAS. Position 559 is a phosphoserine; by atm and atr (serine 559). Residues 611 to 644 are a coiled coil; sequence FLQEEEQRSHELLQRLNAHIEELKQESQRTVEHF.

The protein belongs to the CEP63 family. In terms of processing, phosphorylation at Ser-559 by atm and atr promotes its delocalization from the centrosome and impairs its ability to promote centrosome dependent spindle assembly.

The protein localises to the cytoplasm. The protein resides in the cytoskeleton. Its subcellular location is the microtubule organizing center. It is found in the centrosome. It localises to the centriole. Its function is as follows. Required for normal spindle assembly. Plays a key role in mother-centriole-dependent centriole duplication. Plays a role in DNA damage response. Following DNA damage, such as double-strand breaks (DSBs), is removed from centrosomes; this leads to the inactivation of spindle assembly and delay in mitotic progression. The polypeptide is Centrosomal protein of 63 kDa-B (cep63-b) (Xenopus laevis (African clawed frog)).